Here is a 207-residue protein sequence, read N- to C-terminus: Recombination protein RecR (207 aa).

The C4-type zinc-finger motif lies at 62–77 (CSRCNTFTEQDVCETC). The 100-residue stretch at 85-184 (SVLCVVETPA…KVSRLARGVP (100 aa)) folds into the Toprim domain.

It belongs to the RecR family.

In terms of biological role, may play a role in DNA repair. It seems to be involved in an RecBC-independent recombinational process of DNA repair. It may act with RecF and RecO. The protein is Recombination protein RecR of Ralstonia nicotianae (strain ATCC BAA-1114 / GMI1000) (Ralstonia solanacearum).